The following is a 419-amino-acid chain: Synaptotagmin-1 (419 aa).

Residues 1–57 (MVSESHHEALAAPPVTTVATVLPSNATEPASPGEGKEDAFSKLKEKFMNELHKIPLP) lie on the Vesicular side of the membrane. N-linked (GlcNAc...) asparagine glycosylation occurs at Asn-25. A helical membrane pass occupies residues 58–80 (PWALIAIAIVAVLLVLTCCFCIC). Residues Cys-75, Cys-76, Cys-78, Cys-80, and Cys-83 are each lipidated (S-palmitoyl cysteine). Residues 81–419 (KKCLFKKKNK…EVDAMLAVKK (339 aa)) lie on the Cytoplasmic side of the membrane. The disordered stretch occupies residues 108-139 (KDLGKTMKDQDDDAETGLTDGEEKEEPKEEEK). Over residues 117–131 (QDDDAETGLTDGEEK) the composition is skewed to acidic residues. At Thr-126 the chain carries Phosphothreonine. Residues 133–379 (EPKEEEKLGK…AIGKVFVGYN (247 aa)) form a phospholipid binding region. In terms of domain architecture, C2 1 spans 139 to 258 (KLGKLQYSLD…DFGHVTEEWR (120 aa)). Ca(2+) is bound by residues Leu-169, Asp-170, and Asp-176. Position 227 is a phosphotyrosine (Tyr-227). Asp-228, Phe-229, Asp-230, Ser-233, Lys-234, and Asp-236 together coordinate Ca(2+). Ser-262 carries the post-translational modification Phosphoserine. A C2 2 domain is found at 270–403 (KLGDICFSLR…NPRRPIAQWH (134 aa)). Ca(2+) is bound by residues Asp-301 and Asp-307. Phosphoserine occurs at positions 340 and 342. Residues Asp-361, Asp-363, and Asp-369 each contribute to the Ca(2+) site.

Belongs to the synaptotagmin family. In terms of assembly, homotetramer. Heterodimer; heterodimerizes with SYT2 in presence of calcium. Interacts with SCAMP5. Interacts with STON2. Forms a complex with SV2B, syntaxin 1 and SNAP25. Interacts with SV2A, SV2B and SV2C. Interacts with RIMS1. Interacts with PRRT2. Interacts with DNAJC5 in a phosphorylation-dependent manner. Interacts (via N-terminus) with RAB3A. Interacts with SYT12. Interacts with calmodulin. Interacts with DNM1 (via C-terminal proline-rich domain (PRD)); this interaction facilitates vesicle fission during clathrin-mediated endocytosis (CME). The cofactor is Ca(2+). Glycosylated.

The protein localises to the cytoplasmic vesicle. It is found in the secretory vesicle membrane. It localises to the secretory vesicle. The protein resides in the synaptic vesicle membrane. Its subcellular location is the chromaffin granule membrane. The protein localises to the cytoplasm. Calcium sensor that participates in triggering neurotransmitter release at the synapse. May have a regulatory role in the membrane interactions during trafficking of synaptic vesicles at the active zone of the synapse. It binds acidic phospholipids with a specificity that requires the presence of both an acidic head group and a diacyl backbone. A Ca(2+)-dependent interaction between synaptotagmin and putative receptors for activated protein kinase C has also been reported. It can bind to at least three additional proteins in a Ca(2+)-independent manner; these are neurexins, syntaxin and AP2. Plays a role in dendrite formation by melanocytes. The chain is Synaptotagmin-1 from Macaca fascicularis (Crab-eating macaque).